Reading from the N-terminus, the 450-residue chain is Phosphopentomutase (450 aa).

Ser93 (phosphoserine intermediate) is an active-site residue. Mg(2+)-binding residues include Ser93, Asp231, Asp233, and Asp235. Phosphoserine; by autocatalysis is present on Ser93.

The protein belongs to the phosphohexose mutase family. As to quaternary structure, homotetramer. Mg(2+) is required as a cofactor. Activated by phosphorylation.

The catalysed reaction is alpha-D-ribose 1-phosphate = D-ribose 5-phosphate. It catalyses the reaction 2-deoxy-alpha-D-ribose 1-phosphate = 2-deoxy-D-ribose 5-phosphate. Functionally, catalyzes the conversion of deoxyribose 1-phosphate to deoxyribose 5-phosphate. Also shows weak activity with glucose 1-phosphate and mannose 1-phosphate. Could be involved in pentose biosynthesis. The chain is Phosphopentomutase from Thermococcus kodakarensis (strain ATCC BAA-918 / JCM 12380 / KOD1) (Pyrococcus kodakaraensis (strain KOD1)).